We begin with the raw amino-acid sequence, 172 residues long: Large ribosomal subunit protein uL10 (172 aa).

It belongs to the universal ribosomal protein uL10 family. In terms of assembly, part of the ribosomal stalk of the 50S ribosomal subunit. The N-terminus interacts with L11 and the large rRNA to form the base of the stalk. The C-terminus forms an elongated spine to which L12 dimers bind in a sequential fashion forming a multimeric L10(L12)X complex.

In terms of biological role, forms part of the ribosomal stalk, playing a central role in the interaction of the ribosome with GTP-bound translation factors. The polypeptide is Large ribosomal subunit protein uL10 (Parvibaculum lavamentivorans (strain DS-1 / DSM 13023 / NCIMB 13966)).